Reading from the N-terminus, the 106-residue chain is MMKVLVVVALLLTLIIYSSSDGIDDLEADELVSLMAHEQTRAKACTPRYYDCSHDRHRCCRSSMFKDVCTCFYPEGGHYKEVCTCQQPKHLEYMEKAADKIKNLFG.

Positions 1–20 are cleaved as a signal peptide; sequence MMKVLVVVALLLTLIIYSSS. Residues 21 to 41 constitute a propeptide that is removed on maturation; that stretch reads DGIDDLEADELVSLMAHEQTR. Intrachain disulfides connect Cys-45–Cys-60, Cys-52–Cys-69, Cys-59–Cys-85, and Cys-71–Cys-83.

Belongs to the neurotoxin 19 (CSTX) family. 02 (D7) subfamily. Expressed by the venom gland.

It localises to the secreted. The protein is Toxin-like structure LSTX-D9 of Lycosa singoriensis (Wolf spider).